The sequence spans 205 residues: uncharacterized protein (205 aa).

The first 18 residues, 1–18 (MKASLALLSLLTAFTSHS), serve as a signal peptide directing secretion.

This is an uncharacterized protein from Escherichia coli (strain K12).